Here is a 253-residue protein sequence, read N- to C-terminus: MTTIDLNCDLGESFGAYKMGNDDEILPFVSSINVACGFHAGDPSIMRQTVEKALEHNVAIGAHPGFPDLIGFGRRNMNVSASEVYDYVLYQTGALDAFVKAAGGKMQHVKPHGALYNMAASNPEIADAIAKAIYHINPSLLLYGLANSEAFIQAAEKYKVTLVQEAFADRTYKQDGTLTSRTEENALIKDEDEAIKQVLQMVKEGYVNSVNGEKVAVQAQTICLHGDGEKAVQFAERIYRTFKLNGISICAPK.

Belongs to the LamB/PxpA family. As to quaternary structure, forms a complex composed of PxpA, PxpB and PxpC.

It catalyses the reaction 5-oxo-L-proline + ATP + 2 H2O = L-glutamate + ADP + phosphate + H(+). Functionally, catalyzes the cleavage of 5-oxoproline to form L-glutamate coupled to the hydrolysis of ATP to ADP and inorganic phosphate. The protein is 5-oxoprolinase subunit A of Bacillus cereus (strain ATCC 14579 / DSM 31 / CCUG 7414 / JCM 2152 / NBRC 15305 / NCIMB 9373 / NCTC 2599 / NRRL B-3711).